Reading from the N-terminus, the 155-residue chain is SsrA-binding protein (155 aa).

The protein belongs to the SmpB family.

The protein resides in the cytoplasm. Its function is as follows. Required for rescue of stalled ribosomes mediated by trans-translation. Binds to transfer-messenger RNA (tmRNA), required for stable association of tmRNA with ribosomes. tmRNA and SmpB together mimic tRNA shape, replacing the anticodon stem-loop with SmpB. tmRNA is encoded by the ssrA gene; the 2 termini fold to resemble tRNA(Ala) and it encodes a 'tag peptide', a short internal open reading frame. During trans-translation Ala-aminoacylated tmRNA acts like a tRNA, entering the A-site of stalled ribosomes, displacing the stalled mRNA. The ribosome then switches to translate the ORF on the tmRNA; the nascent peptide is terminated with the 'tag peptide' encoded by the tmRNA and targeted for degradation. The ribosome is freed to recommence translation, which seems to be the essential function of trans-translation. This Streptococcus pyogenes serotype M18 (strain MGAS8232) protein is SsrA-binding protein.